Reading from the N-terminus, the 246-residue chain is tRNA (guanine-N(1)-)-methyltransferase (246 aa).

S-adenosyl-L-methionine-binding positions include glycine 113 and 133–138 (IGDYVL).

It belongs to the RNA methyltransferase TrmD family. In terms of assembly, homodimer.

Its subcellular location is the cytoplasm. It carries out the reaction guanosine(37) in tRNA + S-adenosyl-L-methionine = N(1)-methylguanosine(37) in tRNA + S-adenosyl-L-homocysteine + H(+). In terms of biological role, specifically methylates guanosine-37 in various tRNAs. This is tRNA (guanine-N(1)-)-methyltransferase from Yersinia enterocolitica serotype O:8 / biotype 1B (strain NCTC 13174 / 8081).